The sequence spans 154 residues: Large ribosomal subunit protein uL13 (154 aa).

This sequence belongs to the universal ribosomal protein uL13 family. Part of the 50S ribosomal subunit.

This protein is one of the early assembly proteins of the 50S ribosomal subunit, although it is not seen to bind rRNA by itself. It is important during the early stages of 50S assembly. This chain is Large ribosomal subunit protein uL13, found in Brucella suis (strain ATCC 23445 / NCTC 10510).